The chain runs to 913 residues: Chitin synthase 1 (913 aa).

The interval 1–135 (MAYRGGGPND…QQPGAQTGGL (135 aa)) is disordered. N-linked (GlcNAc...) asparagine glycosylation is present at Asn25. Residues 41–56 (RDPHARGTSPYEHHLG) are compositionally biased toward basic and acidic residues. Residue Asn539 is glycosylated (N-linked (GlcNAc...) asparagine). Transmembrane regions (helical) follow at residues 566–586 (FFFH…WFSL), 625–645 (IINS…FVLA), 658–678 (IASF…SGYL), 712–732 (VILV…FMYL), 740–760 (SFPY…VYAF), 840–860 (TGLV…ITTD), and 881–901 (FLLY…LWFL).

This sequence belongs to the chitin synthase family. Class III subfamily.

Its subcellular location is the cell membrane. It catalyses the reaction [(1-&gt;4)-N-acetyl-beta-D-glucosaminyl](n) + UDP-N-acetyl-alpha-D-glucosamine = [(1-&gt;4)-N-acetyl-beta-D-glucosaminyl](n+1) + UDP + H(+). In terms of biological role, polymerizes chitin, a structural polymer of the cell wall and septum, by transferring the sugar moiety of UDP-GlcNAc to the non-reducing end of the growing chitin polymer. Plays a role in cell wall integrity and is involved in tolerance to hyperosmotic conditions. Required to successfully penetrate the host plants and thus plays a key role in pathogenicity. The sequence is that of Chitin synthase 1 from Verticillium dahliae (strain VdLs.17 / ATCC MYA-4575 / FGSC 10137) (Verticillium wilt).